Reading from the N-terminus, the 666-residue chain is Pentatricopeptide repeat-containing protein At1g64100 (666 aa).

PPR repeat units lie at residues 105-139 (TAVDCNKVIGVFVRMNRPDVAISLYRKMEIRRIPL), 140-174 (NIYSFNILIKCFCDCHKLSFSLSTFGKLTKLGFQP), 175-209 (DVVTFNTLLHGLCLEDRISEALALFGYMVETGFLE), 225-259 (VVITFNTLINGLCLEGRVLEAAALVNKMVGKGLHI), 260-294 (DVVTYGTIVNGMCKMGDTKSALNLLSKMEETHIKP), 295-329 (DVVIYSAIIDRLCKDGHHSDAQYLFSEMLEKGIAP), 330-364 (NVFTYNCMIDGFCSFGRWSDAQRLLRDMIEREINP), 365-399 (DVLTFNALISASVKEGKLFEAEKLCDEMLHRCIFP), 400-430 (DTVTYNSMIYGFCKHNRFDDAKHMFDLMASP), 431-465 (DVVTFNTIIDVYCRAKRVDEGMQLLREISRRGLVA), 466-500 (NTTTYNTLIHGFCEVDNLNAAQDLFQEMISHGVCP), 501-535 (DTITCNILLYGFCENEKLEEALELFEVIQMSKIDL), 536-570 (DTVAYNIIIHGMCKGSKVDEAWDLFCSLPIHGVEP), 571-605 (DVQTYNVMISGFCGKSAISDANVLFHKMKDNGHEP), and 606-640 (DNSTYNTLIRGCLKAGEIDKSIELISEMRSNGFSG).

The protein belongs to the PPR family. P subfamily.

The sequence is that of Pentatricopeptide repeat-containing protein At1g64100 from Arabidopsis thaliana (Mouse-ear cress).